We begin with the raw amino-acid sequence, 514 residues long: 2,3-bisphosphoglycerate-independent phosphoglycerate mutase (514 aa).

Mn(2+)-binding residues include Asp14 and Ser64. The active-site Phosphoserine intermediate is the Ser64. Substrate is bound by residues His125, 155–156 (RD), Arg187, Arg193, 263–266 (RADR), and Lys336. Mn(2+)-binding residues include Asp403, His407, Asp444, His445, and His463.

Belongs to the BPG-independent phosphoglycerate mutase family. As to quaternary structure, monomer. The cofactor is Mn(2+).

It catalyses the reaction (2R)-2-phosphoglycerate = (2R)-3-phosphoglycerate. Its pathway is carbohydrate degradation; glycolysis; pyruvate from D-glyceraldehyde 3-phosphate: step 3/5. Functionally, catalyzes the interconversion of 2-phosphoglycerate and 3-phosphoglycerate. The polypeptide is 2,3-bisphosphoglycerate-independent phosphoglycerate mutase (Salmonella paratyphi A (strain ATCC 9150 / SARB42)).